A 254-amino-acid chain; its full sequence is MSKPWLFTVHGTGQPDPLGPGLPADTARDVLDIYRWQPIGNYPAAAFPMWPSVEKGVAELILQIELKLDADPYADFALAGYSQGAIVVGQVLKHHIINPRGRLHRFLHRLRKVIFWGNPMRQKGFAHTDEWIHQVAASDTMGILEDRLENLEQYGFEVRDYAHDGDMYASIKEDDMHEYEVAIGRIVMSARRFIGGKDSVIAQLIELGQRPIWEGIAMARAIIDALTFFAKSTQGPSWPHLYNRFPAVEFLRRI.

Residues Ser-82, Asp-166, and His-240 contribute to the active site.

This sequence belongs to the L5likevirus endolysin B protein family.

In terms of biological role, endolysin that degrades the junction between mycolic acid and peptidoglycans in the host cell wall and participates with the holin protein in the sequential events which lead to the programmed host cell lysis releasing the mature viral particles. Once the holin has permeabilized the host cell membrane, the endolysin can reach the periplasm and break down the mycolic acid-rich outer membrane. Cleaves the ester linkage joining the mycolic acid-rich outer membrane to arabinogalactan, releasing free mycolic acids. This chain is Endolysin B (12), found in Mycobacterium (Mycobacteriophage L5).